A 198-amino-acid chain; its full sequence is Recombination protein RecR (198 aa).

The C4-type zinc-finger motif lies at 57–72; it reads CAMCNTFTESAVCETC. One can recognise a Toprim domain in the interval 80–175; sequence ALLCVVETPG…KVSRLARGVP (96 aa).

It belongs to the RecR family.

Functionally, may play a role in DNA repair. It seems to be involved in an RecBC-independent recombinational process of DNA repair. It may act with RecF and RecO. This Herminiimonas arsenicoxydans protein is Recombination protein RecR.